The primary structure comprises 224 residues: Uracil-DNA glycosylase (224 aa).

Asp64 acts as the Proton acceptor in catalysis.

This sequence belongs to the uracil-DNA glycosylase (UDG) superfamily. UNG family.

The protein resides in the cytoplasm. The catalysed reaction is Hydrolyzes single-stranded DNA or mismatched double-stranded DNA and polynucleotides, releasing free uracil.. Excises uracil residues from the DNA which can arise as a result of misincorporation of dUMP residues by DNA polymerase or due to deamination of cytosine. This chain is Uracil-DNA glycosylase, found in Geobacillus sp. (strain WCH70).